The sequence spans 103 residues: Co-chaperonin GroES (103 aa).

Positions 31-67 (GGILLPDTAKEKPQVGEVAQVGPGKRNEDGSRQSPEV) are disordered.

This sequence belongs to the GroES chaperonin family. As to quaternary structure, heptamer of 7 subunits arranged in a ring. Interacts with the chaperonin GroEL.

It localises to the cytoplasm. Its function is as follows. Together with the chaperonin GroEL, plays an essential role in assisting protein folding. The GroEL-GroES system forms a nano-cage that allows encapsulation of the non-native substrate proteins and provides a physical environment optimized to promote and accelerate protein folding. GroES binds to the apical surface of the GroEL ring, thereby capping the opening of the GroEL channel. This chain is Co-chaperonin GroES, found in Prochlorococcus marinus (strain NATL2A).